A 78-amino-acid chain; its full sequence is Defensin-like protein 173 (78 aa).

An N-terminal signal peptide occupies residues 1-23; it reads MAKAPSPLVFPIIFLIIFALVEP. 4 disulfide bridges follow: cysteine 27–cysteine 71, cysteine 34–cysteine 56, cysteine 40–cysteine 65, and cysteine 44–cysteine 67.

Belongs to the DEFL family.

It is found in the secreted. The protein is Defensin-like protein 173 (LCR63) of Arabidopsis thaliana (Mouse-ear cress).